A 470-amino-acid chain; its full sequence is Poly(A) polymerase catalytic subunit (470 aa).

Catalysis depends on residues Asp192 and Asp194.

The protein belongs to the poxviridae poly(A) polymerase catalytic subunit family. Heterodimer of a large (catalytic) subunit and a small (regulatory) subunit.

The catalysed reaction is RNA(n) + ATP = RNA(n)-3'-adenine ribonucleotide + diphosphate. Functionally, polymerase that creates the 3'-poly(A) tail of mRNA's. The chain is Poly(A) polymerase catalytic subunit (PAPL) from Oryctolagus cuniculus (Rabbit).